The primary structure comprises 432 residues: uncharacterized protein (432 aa).

12 helical membrane-spanning segments follow: residues 35–55 (VARV…VIYL), 60–80 (LPPA…IATG), 112–132 (VAGM…PLWS), 144–164 (VGLL…LGAL), 185–205 (LAVA…LWAA), 209–229 (AVAW…ASLL), 242–262 (AHSI…PVLL), 274–294 (GAVI…LSAM), 313–333 (LIAP…AAGL), 359–379 (AAAV…AAAL), 384–404 (LLGW…PMPL), and 408–428 (TVIA…AALA).

To M.tuberculosis Rv3630 and M.bovis Mb3654.

Its subcellular location is the cell membrane. This is an uncharacterized protein from Mycobacterium tuberculosis (strain CDC 1551 / Oshkosh).